The primary structure comprises 205 residues: Octanoyltransferase (205 aa).

The 176-residue stretch at 29–204 (AETPDEIWIV…HLLQQLDQKN (176 aa)) folds into the BPL/LPL catalytic domain. Substrate is bound by residues 68–75 (RGGQVTYH), 135–137 (ALG), and 148–150 (GVS). C166 acts as the Acyl-thioester intermediate in catalysis.

It belongs to the LipB family.

Its subcellular location is the cytoplasm. The enzyme catalyses octanoyl-[ACP] + L-lysyl-[protein] = N(6)-octanoyl-L-lysyl-[protein] + holo-[ACP] + H(+). It participates in protein modification; protein lipoylation via endogenous pathway; protein N(6)-(lipoyl)lysine from octanoyl-[acyl-carrier-protein]: step 1/2. Its function is as follows. Catalyzes the transfer of endogenously produced octanoic acid from octanoyl-acyl-carrier-protein onto the lipoyl domains of lipoate-dependent enzymes. Lipoyl-ACP can also act as a substrate although octanoyl-ACP is likely to be the physiological substrate. This Dechloromonas aromatica (strain RCB) protein is Octanoyltransferase.